The following is a 332-amino-acid chain: ADP-L-glycero-D-manno-heptose-6-epimerase (332 aa).

Residues 13–14 (FI), 34–35 (DN), Lys41, Lys56, 78–82 (EGACS), and Asn95 contribute to the NADP(+) site. Catalysis depends on Tyr142, which acts as the Proton acceptor. Lys146 provides a ligand contact to NADP(+). Asn171 provides a ligand contact to substrate. Val172 and Lys180 together coordinate NADP(+). The Proton acceptor role is filled by Lys180. Substrate is bound by residues Arg182, His189, 203 to 206 (FEGC), Arg216, and Tyr295.

The protein belongs to the NAD(P)-dependent epimerase/dehydratase family. HldD subfamily. In terms of assembly, homopentamer. NADP(+) is required as a cofactor.

The catalysed reaction is ADP-D-glycero-beta-D-manno-heptose = ADP-L-glycero-beta-D-manno-heptose. It functions in the pathway nucleotide-sugar biosynthesis; ADP-L-glycero-beta-D-manno-heptose biosynthesis; ADP-L-glycero-beta-D-manno-heptose from D-glycero-beta-D-manno-heptose 7-phosphate: step 4/4. Its function is as follows. Catalyzes the interconversion between ADP-D-glycero-beta-D-manno-heptose and ADP-L-glycero-beta-D-manno-heptose via an epimerization at carbon 6 of the heptose. This Thiobacillus denitrificans (strain ATCC 25259 / T1) protein is ADP-L-glycero-D-manno-heptose-6-epimerase.